The following is a 155-amino-acid chain: Cytochrome P450 (155 aa).

Residue C99 coordinates heme.

This sequence belongs to the cytochrome P450 family. It depends on heme as a cofactor.

The sequence is that of Cytochrome P450 from Helianthus annuus (Common sunflower).